The chain runs to 1408 residues: DNA-directed RNA polymerase subunit beta' (1408 aa).

Positions 70, 72, 85, and 88 each coordinate Zn(2+). Mg(2+)-binding residues include Asp460, Asp462, and Asp464. Residues Cys814, Cys887, Cys894, and Cys897 each coordinate Zn(2+).

This sequence belongs to the RNA polymerase beta' chain family. In terms of assembly, the RNAP catalytic core consists of 2 alpha, 1 beta, 1 beta' and 1 omega subunit. When a sigma factor is associated with the core the holoenzyme is formed, which can initiate transcription. It depends on Mg(2+) as a cofactor. Requires Zn(2+) as cofactor.

The enzyme catalyses RNA(n) + a ribonucleoside 5'-triphosphate = RNA(n+1) + diphosphate. In terms of biological role, DNA-dependent RNA polymerase catalyzes the transcription of DNA into RNA using the four ribonucleoside triphosphates as substrates. This chain is DNA-directed RNA polymerase subunit beta', found in Hydrogenovibrio crunogenus (strain DSM 25203 / XCL-2) (Thiomicrospira crunogena).